The primary structure comprises 339 residues: Phospho-N-acetylmuramoyl-pentapeptide-transferase (339 aa).

The next 10 membrane-spanning stretches (helical) occupy residues T4–I24, M53–L73, A80–L100, G113–V133, L145–V165, G176–A196, F202–N222, V228–T248, W253–V273, and V318–Y338.

The protein belongs to the glycosyltransferase 4 family. MraY subfamily. It depends on Mg(2+) as a cofactor.

It localises to the cell membrane. The catalysed reaction is UDP-N-acetyl-alpha-D-muramoyl-L-alanyl-gamma-D-glutamyl-L-lysyl-D-alanyl-D-alanine + di-trans,octa-cis-undecaprenyl phosphate = Mur2Ac(oyl-L-Ala-gamma-D-Glu-L-Lys-D-Ala-D-Ala)-di-trans,octa-cis-undecaprenyl diphosphate + UMP. Its pathway is cell wall biogenesis; peptidoglycan biosynthesis. Functionally, catalyzes the initial step of the lipid cycle reactions in the biosynthesis of the cell wall peptidoglycan: transfers peptidoglycan precursor phospho-MurNAc-pentapeptide from UDP-MurNAc-pentapeptide onto the lipid carrier undecaprenyl phosphate, yielding undecaprenyl-pyrophosphoryl-MurNAc-pentapeptide, known as lipid I. The chain is Phospho-N-acetylmuramoyl-pentapeptide-transferase from Streptococcus mutans serotype c (strain ATCC 700610 / UA159).